The sequence spans 351 residues: Sulfate/thiosulfate import ATP-binding protein CysA (351 aa).

An ABC transporter domain is found at 5–235 (IVVADATKRY…PANAFVMSFL (231 aa)). 37–44 (GPSGSGKS) is an ATP binding site.

It belongs to the ABC transporter superfamily. Sulfate/tungstate importer (TC 3.A.1.6) family. As to quaternary structure, the complex is composed of two ATP-binding proteins (CysA), two transmembrane proteins (CysT and CysW) and a solute-binding protein (CysP).

It is found in the cell membrane. The catalysed reaction is sulfate(out) + ATP + H2O = sulfate(in) + ADP + phosphate + H(+). It catalyses the reaction thiosulfate(out) + ATP + H2O = thiosulfate(in) + ADP + phosphate + H(+). Part of the ABC transporter complex CysAWTP involved in sulfate/thiosulfate import. Responsible for energy coupling to the transport system. The sequence is that of Sulfate/thiosulfate import ATP-binding protein CysA from Mycobacterium bovis (strain ATCC BAA-935 / AF2122/97).